The following is a 217-amino-acid chain: Large ribosomal subunit protein uL1 (217 aa).

Belongs to the universal ribosomal protein uL1 family. In terms of assembly, component of the large ribosomal subunit.

It is found in the cytoplasm. In terms of biological role, component of the large ribosomal subunit. The ribosome is a large ribonucleoprotein complex responsible for the synthesis of proteins in the cell. The sequence is that of Large ribosomal subunit protein uL1 (rpl10a) from Xenopus laevis (African clawed frog).